A 282-amino-acid chain; its full sequence is MAITAAQVKELRDRTGAGMMDCKKALTETAGDIELAIDNMRKSGAAKAAKKAGNIAAEGTILIKNGEGYAALLEVNCQTDFVAKDSNFLAFANEVLDVAAASKVTIEDLKAQFEETRVALVAKIGENINVRRVEYIDGANLAQYRHGERIGVVVTGEADEETLKHVAMHVAASKPEYVNPSDVPAEVVEKEKALQIEIAMNEGKPAEIAEKMVIGRMKKFTGEVSLTGQAYIMEPKKTVGEVLKEKGASVSNFIRLEVGEGIERKEEDFAAEVAAQIAATKA.

Residues 79 to 82 form an involved in Mg(2+) ion dislocation from EF-Tu region; that stretch reads TDFV.

It belongs to the EF-Ts family.

The protein resides in the cytoplasm. Its function is as follows. Associates with the EF-Tu.GDP complex and induces the exchange of GDP to GTP. It remains bound to the aminoacyl-tRNA.EF-Tu.GTP complex up to the GTP hydrolysis stage on the ribosome. In Shewanella woodyi (strain ATCC 51908 / MS32), this protein is Elongation factor Ts.